Consider the following 1581-residue polypeptide: Calmodulin-regulated spectrin-associated protein 1 (1581 aa).

In terms of domain architecture, Calponin-homology (CH) spans 215-330 (ESPAHQKVRY…FIAELFWWFE (116 aa)). A phosphoserine mark is found at S216, S370, S374, and S415. The disordered stretch occupies residues 351–399 (VLQQKSSRPPVPISNATKRSFLGSPAAMSPADQPPSTQPLAEGSHRYHL). Residues 424 to 470 (RQKQQKVSQTEEIPDQRHRSNSLTRVDGQPRGAIGAWPDKKNRPVSQ) are disordered. Residue T511 is modified to Phosphothreonine. 5 positions are modified to phosphoserine: S550, S553, S560, S572, and S586. Residues 603–617 (KQITTKEDERGEGRP) are compositionally biased toward basic and acidic residues. Positions 603-649 (KQITTKEDERGEGRPRTIMAKRPSEGSQPMVRKKVSGGHGSRDLNRT) are disordered. A phosphoserine mark is found at S626, S718, S724, S734, and S736. The segment covering 765–785 (ESAKLQEDMKVKEHEDKDDAS) has biased composition (basic and acidic residues). Disordered stretches follow at residues 765-803 (ESAKLQEDMKVKEHEDKDDASGRSSPCLSTTSQLSSMSM) and 821-866 (LNSC…SKDP). 2 stretches are compositionally biased toward low complexity: residues 792–803 (LSTTSQLSSMSM) and 826–837 (TKSSTSSSQKTT). A compositionally biased stretch (basic and acidic residues) spans 853–865 (QKREQSPGRHSKD). Residues 867-888 (ASLLASELVQLHMQLEEKRRAI) form a sufficient for interaction with SPTBN1 region. 2 coiled-coil regions span residues 869 to 905 (LLASELVQLHMQLEEKRRAIEAQKKKMEALSARQRLK) and 1005 to 1037 (DVNECDLSIEKLNETISTLQQAILKISQQQEQL). Positions 899–918 (SARQRLKLGKAAFLHVVKKG) are sufficient for interaction with calmodulin. Disordered stretches follow at residues 1064–1143 (FVEP…ELPE), 1225–1251 (PDEDGEVVGHESSVELGGDSDQKPGVG), 1288–1315 (QLEAEVELKRDEARRKAEEDRLRKEEEK), and 1332–1428 (QALE…DWET). S1069 is subject to Phosphoserine. A compositionally biased stretch (basic and acidic residues) spans 1092–1103 (RPAELKVPKDRQ). The segment covering 1104 to 1132 (QGCSRSKTPTPSVETLPQSRSLPPSTHPR) has biased composition (polar residues). S1133 carries the phosphoserine modification. Residues 1225 to 1237 (PDEDGEVVGHESS) show a composition bias toward basic and acidic residues. The stretch at 1265-1336 (AKKRAAFLLK…RRKQQQALEE (72 aa)) forms a coiled coil. The span at 1342–1353 (PKSKPKKPRPKS) shows a compositional bias: basic residues. Residues 1361–1372 (SDSGTKCSSTHN) show a composition bias toward polar residues. A compositionally biased stretch (low complexity) spans 1373 to 1390 (LSQTHSGSSLSLASAATT). A phosphoserine mark is found at S1378 and S1407. Positions 1443 to 1576 (GPKLFKEPSS…QPKRPTVPKK (134 aa)) constitute a CKK domain. Y1516 is modified (phosphotyrosine).

It belongs to the CAMSAP1 family. As to quaternary structure, interacts with spectrin via SPTBN1; the interaction is direct. Interacts with calmodulin; calcium-dependent it prevents interaction with spectrin. Expressed in the central nervous system.

It localises to the cytoplasm. It is found in the cytoskeleton. Functionally, key microtubule-organizing protein that specifically binds the minus-end of non-centrosomal microtubules and regulates their dynamics and organization. Specifically recognizes growing microtubule minus-ends and stabilizes microtubules. Acts on free microtubule minus-ends that are not capped by microtubule-nucleating proteins or other factors and protects microtubule minus-ends from depolymerization. In contrast to CAMSAP2 and CAMSAP3, tracks along the growing tips of minus-end microtubules without significantly affecting the polymerization rate: binds at the very tip of the microtubules minus-end and acts as a minus-end tracking protein (-TIP) that dissociates from microtubules after allowing tubulin incorporation. Through interaction with spectrin may regulate neurite outgrowth. The polypeptide is Calmodulin-regulated spectrin-associated protein 1 (Camsap1) (Mus musculus (Mouse)).